The primary structure comprises 331 residues: Ketol-acid reductoisomerase (NADP(+)) (331 aa).

Positions 2-182 constitute a KARI N-terminal Rossmann domain; the sequence is AQLFYDSDAD…GGTRAGILET (181 aa). Residues 25-28, Ser-51, Ser-53, and 83-86 contribute to the NADP(+) site; these read YGSQ and DEFQ. The active site involves His-108. Gly-134 contributes to the NADP(+) binding site. Residues 183-328 form the KARI C-terminal knotted domain; that stretch reads NFKEETETDL…KGLRSMFSWL (146 aa). Mg(2+) contacts are provided by Asp-191, Glu-195, Glu-227, and Glu-231. Ser-252 contacts substrate.

It belongs to the ketol-acid reductoisomerase family. Requires Mg(2+) as cofactor.

The enzyme catalyses (2R)-2,3-dihydroxy-3-methylbutanoate + NADP(+) = (2S)-2-acetolactate + NADPH + H(+). It carries out the reaction (2R,3R)-2,3-dihydroxy-3-methylpentanoate + NADP(+) = (S)-2-ethyl-2-hydroxy-3-oxobutanoate + NADPH + H(+). It participates in amino-acid biosynthesis; L-isoleucine biosynthesis; L-isoleucine from 2-oxobutanoate: step 2/4. It functions in the pathway amino-acid biosynthesis; L-valine biosynthesis; L-valine from pyruvate: step 2/4. Its function is as follows. Involved in the biosynthesis of branched-chain amino acids (BCAA). Catalyzes an alkyl-migration followed by a ketol-acid reduction of (S)-2-acetolactate (S2AL) to yield (R)-2,3-dihydroxy-isovalerate. In the isomerase reaction, S2AL is rearranged via a Mg-dependent methyl migration to produce 3-hydroxy-3-methyl-2-ketobutyrate (HMKB). In the reductase reaction, this 2-ketoacid undergoes a metal-dependent reduction by NADPH to yield (R)-2,3-dihydroxy-isovalerate. The polypeptide is Ketol-acid reductoisomerase (NADP(+)) (Parasynechococcus marenigrum (strain WH8102)).